A 729-amino-acid polypeptide reads, in one-letter code: Catalase-peroxidase (729 aa).

The interval 1–26 is disordered; it reads MTMDQKTDNAGKCPVAHTAPRGRSNR. A cross-link (tryptophyl-tyrosyl-methioninium (Trp-Tyr) (with M-245)) is located at residues 97 to 219; it reads WHSAGTYRIT…LAAVQMGLIY (123 aa). Catalysis depends on His-98, which acts as the Proton acceptor. The tryptophyl-tyrosyl-methioninium (Tyr-Met) (with W-97) cross-link spans 219 to 245; the sequence is YVNPEGPNGNPDPVAAAHDIRETFARM. His-260 is a binding site for heme b.

The protein belongs to the peroxidase family. Peroxidase/catalase subfamily. Homodimer or homotetramer. Heme b serves as cofactor. Formation of the three residue Trp-Tyr-Met cross-link is important for the catalase, but not the peroxidase activity of the enzyme.

The enzyme catalyses H2O2 + AH2 = A + 2 H2O. The catalysed reaction is 2 H2O2 = O2 + 2 H2O. In terms of biological role, bifunctional enzyme with both catalase and broad-spectrum peroxidase activity. The sequence is that of Catalase-peroxidase from Sinorhizobium medicae (strain WSM419) (Ensifer medicae).